Consider the following 373-residue polypeptide: MTLQFPIQAPARYAGETEPVKRPREFACFSYDKDHKFRLDDSSMKWYYPPEIGTNLSHGYDTFIKHDDSVDEHLDSLLKTIADHEQQTGGPIDAHIVTWRGMLTKVGGSDASFLSLWFEMNATLYRLTFTSGYKFETLSTIPRPWGETTRDYIENRDNEVTNNKEQYCSVVRTGFGKSIVCLGGEVDAIWDAKPETPGKPINWVELKTTAEIHTHNDRFKFDRKLMRYWIQSFLLGVPKIIVGYRTQDGILSGVEEFSTLSMPQDVQRRKTAKWDGNVCIKFASLFLDWLRQSINDGGVWRIRRENKSDHIELFKVEEVGHGSIITDEFMNWRIKLSLNKDKPPGFEPSDAADAEPSMAEEPVPETASASGAY.

E136 contributes to the a divalent metal cation binding site. Residues C168 and E185 each coordinate substrate. The a divalent metal cation site is built by D187, E205, and L206. Residues K207 and Q231 each coordinate substrate. The tract at residues 340–373 (KDKPPGFEPSDAADAEPSMAEEPVPETASASGAY) is disordered.

The protein belongs to the DXO/Dom3Z family. As to quaternary structure, interacts with RAT1; the interaction is direct, stabilizes RAT1 protein structure and stimulates its exoribonuclease activity. The interaction also stimulates RAI1 pyrophosphohydrolase activity, probably by recruiting it to mRNA substrates. The cofactor is a divalent metal cation.

The protein localises to the nucleus. The enzyme catalyses a 5'-end NAD(+)-phospho-ribonucleoside in mRNA + H2O = a 5'-end phospho-ribonucleoside in mRNA + NAD(+) + H(+). It catalyses the reaction a 5'-end (N(7)-methyl 5'-triphosphoguanosine)-ribonucleoside-ribonucleotide in mRNA + H2O = a (N(7)-methyl 5'-triphosphoguanosine)-nucleoside + a 5'-end phospho-ribonucleoside in mRNA + H(+). It carries out the reaction a 5'-end triphospho-ribonucleoside in mRNA + H2O = a 5'-end phospho-ribonucleoside in mRNA + diphosphate + H(+). Its function is as follows. Decapping enzyme for NAD-capped RNAs: specifically hydrolyzes the nicotinamide adenine dinucleotide (NAD) cap from a subset of RNAs by removing the entire NAD moiety from the 5'-end of an NAD-capped RNA. The NAD-cap is present at the 5'-end of some RNAs and snoRNAs. In contrast to the canonical 5'-end N7 methylguanosine (m7G) cap, the NAD cap promotes mRNA decay. Also acts as a non-canonical decapping enzyme that removes the entire cap structure of m7G capped or incompletely capped RNAs. Has decapping activity toward incomplete 5'-end m7G cap mRNAs such as unmethylated 5'-end-capped RNA (cap0), while it has no activity toward 2'-O-ribose methylated m7G cap (cap1). Also possesses RNA 5'-pyrophosphohydrolase activity by hydrolyzing the 5'-end triphosphate to release pyrophosphates. Stimulates exoribonuclease activity of Rat1, allowing it to degrade RNAs with stable secondary structure more effectively. In Chaetomium globosum (strain ATCC 6205 / CBS 148.51 / DSM 1962 / NBRC 6347 / NRRL 1970) (Soil fungus), this protein is Decapping nuclease RAI1 (RAI1).